A 311-amino-acid polypeptide reads, in one-letter code: Long form salivary protein D7L1 (311 aa).

The first 21 residues, 1-21 (MIVTGVLLFILLELFAQGSQA), serve as a signal peptide directing secretion. 4 disulfides stabilise this stretch: Cys37–Cys73, Cys69–Cys128, Cys178–Cys211, and Cys252–Cys263.

This sequence belongs to the PBP/GOBP family.

Its subcellular location is the secreted. Its function is as follows. Modulates blood feeding of female mosquitoes on vertebrate species by binding and sequestering different mediators involved in the host response. Binds leukotriene C4 and U-46619, a stable analog of thromboxane A2. Inhibits agonist-induced platelet aggregation. Exhibits vasodilating activity. The chain is Long form salivary protein D7L1 from Anopheles gambiae (African malaria mosquito).